An 809-amino-acid chain; its full sequence is Leucine--tRNA ligase (809 aa).

The short motif at 40 to 51 is the 'HIGH' region element; it reads PYPSGQGLHVGH. Residues 581–585 carry the 'KMSKS' region motif; sequence KMSKS. An ATP-binding site is contributed by Lys-584.

It belongs to the class-I aminoacyl-tRNA synthetase family.

It is found in the cytoplasm. The catalysed reaction is tRNA(Leu) + L-leucine + ATP = L-leucyl-tRNA(Leu) + AMP + diphosphate. This is Leucine--tRNA ligase from Levilactobacillus brevis (strain ATCC 367 / BCRC 12310 / CIP 105137 / JCM 1170 / LMG 11437 / NCIMB 947 / NCTC 947) (Lactobacillus brevis).